Here is a 118-residue protein sequence, read N- to C-terminus: Protein BEX4 (118 aa).

Residues Val-14–Arg-50 are disordered. A compositionally biased stretch (basic and acidic residues) spans Lys-28–Lys-44. The interval Ser-30–Val-88 is interaction with SIRT2. The tract at residues Ser-30–Pro-118 is interaction with alpha-tubulin. Cys-115 contacts Zn(2+).

The protein belongs to the BEX family. As to quaternary structure, interacts with alpha-tubulin. Interacts with SIRT2. Post-translationally, ubiquitinated and degraded by the proteasome. In terms of tissue distribution, expressed in both Sertoli and germ cells as well as interstitial area of the testis (at protein level).

Its subcellular location is the cytoplasm. It is found in the cytoskeleton. The protein resides in the spindle pole. It localises to the nucleus. In terms of biological role, may play a role in microtubule deacetylation by negatively regulating the SIRT2 deacetylase activity toward alpha-tubulin and thereby participate in the control of cell cycle progression and genomic stability. In absence of reductive stress, acts as a pseudosubstrate for the CRL2(FEM1B) complex: associates with FEM1B via zinc, thereby preventing association between FEM1B and its substrates. The polypeptide is Protein BEX4 (Mus musculus (Mouse)).